Consider the following 1205-residue polypeptide: Nitric oxide synthase 3 (1205 aa).

The tract at residues 1–73 is disordered; that stretch reads MGNLKSVGQE…PPEGPKFPRV (73 aa). The N-myristoyl glycine moiety is linked to residue Gly2. Residues Cys15 and Cys26 are each lipidated (S-palmitoyl cysteine). Over residues 15 to 27 the composition is skewed to gly residues; sequence CGLGLGLGLGLCG. The segment covering 33 to 47 has biased composition (pro residues); sequence TPAPEPSRAPAPATP. Residues Cys96 and Cys101 each coordinate Zn(2+). The tract at residues 100–488 is interaction with NOSIP; the sequence is RCLGSLVLPR…PDPWKGSAAK (389 aa). Ser104 is a (6R)-L-erythro-5,6,7,8-tetrahydrobiopterin binding site. Ser116 is modified (phosphoserine; by CDK5). Cys186 lines the heme b pocket. L-arginine-binding residues include Gln249, Trp358, Tyr359, Glu363, and Asn368. The (6R)-L-erythro-5,6,7,8-tetrahydrobiopterin site is built by Ala448, Trp449, and Phe462. Position 477 (Tyr477) interacts with heme b. The calmodulin-binding stretch occupies residues 492-512; sequence IARKKTFKEVANAVKISASLM. Phosphothreonine; by AMPK is present on Thr497. One can recognise a Flavodoxin-like domain in the interval 522 to 705; sequence ASILYASETV…AFRGWAQAAF (184 aa). The FMN site is built by Ser528, Glu529, Thr530, Arg532, Ser574, and Thr575. Phosphoserine occurs at positions 617, 635, and 640. Residues Ser656, Cys663, Glu689, and Gln693 each coordinate FMN. The region spanning 758 to 1004 is the FAD-binding FR-type domain; the sequence is RKMFQATVLS…IRAAPSFRLP (247 aa). Residue Arg778 coordinates NADP(+). His800 provides a ligand contact to FAD. The disordered stretch occupies residues 820–848; sequence EDPTPPTESVGVEQLEKGSPGGPPPSWVR. Residue Ser838 is modified to Phosphoserine. FAD is bound by residues Arg940, Tyr942, Ser943, Thr958, Ala960, Tyr964, Val977, Cys978, and Ser979. Residues Thr1018, Arg1051, Ser1080, Arg1081, Lys1087, Tyr1089, and Gln1091 each contribute to the NADP(+) site. Thr1177 carries the phosphothreonine modification. Ser1179 is modified (phosphoserine; by AMPK). Residue Ser1181 is modified to Phosphoserine.

It belongs to the NOS family. Homodimer. Interacts with NOSIP and NOSTRIN. Interacts with HSP90AB1. Forms a complex with ASL, ASS1 and SLC7A1; the complex regulates cell-autonomous L-arginine synthesis and citrulline recycling while channeling extracellular L-arginine to nitric oxide synthesis pathway. It depends on heme b as a cofactor. FAD is required as a cofactor. Requires FMN as cofactor. (6R)-L-erythro-5,6,7,8-tetrahydrobiopterin serves as cofactor. Post-translationally, phosphorylation by AMPK at Ser-1179 in the presence of Ca(2+)-calmodulin (CaM) activates activity. In absence of Ca(2+)-calmodulin, AMPK also phosphorylates Thr-497, resulting in inhibition of activity. Phosphorylation of Ser-116 by CDK5 reduces activity.

Its subcellular location is the membrane. The protein localises to the caveola. It localises to the cytoplasm. The protein resides in the cytoskeleton. It is found in the golgi apparatus. Its subcellular location is the cell membrane. It catalyses the reaction 2 L-arginine + 3 NADPH + 4 O2 + H(+) = 2 L-citrulline + 2 nitric oxide + 3 NADP(+) + 4 H2O. With respect to regulation, stimulated by calcium/calmodulin. Inhibited by NOSIP and NOSTRIN. In terms of biological role, produces nitric oxide (NO) which is implicated in vascular smooth muscle relaxation through a cGMP-mediated signal transduction pathway. NO mediates vascular endothelial growth factor (VEGF)-induced angiogenesis in coronary vessels and promotes blood clotting through the activation of platelets. This Sus scrofa (Pig) protein is Nitric oxide synthase 3 (NOS3).